Here is a 248-residue protein sequence, read N- to C-terminus: MSFVVIIPARYASTRLPGKPLVDINGKPMIVHVLERARESGAERIIVATDHEDVARAVEAAGGEVCMTRADHQSGTERLAEVVEKCAFSDDTVIVNVQGDEPMIPATIIRQVADNLAQRQVGMATLAVPIHNAEEAFNPNAVKVVLDAEGYALYFSRATIPWDRDRFAEGLETVGDNFLRHLGIYGYRAGFIRRYVNWQASPLEHIEMLEQLRVLWYGEKIHVAVAQEVPGTGVDTPEDLERVRAEMR.

This sequence belongs to the KdsB family.

The protein resides in the cytoplasm. The catalysed reaction is 3-deoxy-alpha-D-manno-oct-2-ulosonate + CTP = CMP-3-deoxy-beta-D-manno-octulosonate + diphosphate. It participates in nucleotide-sugar biosynthesis; CMP-3-deoxy-D-manno-octulosonate biosynthesis; CMP-3-deoxy-D-manno-octulosonate from 3-deoxy-D-manno-octulosonate and CTP: step 1/1. Its pathway is bacterial outer membrane biogenesis; lipopolysaccharide biosynthesis. Its function is as follows. Activates KDO (a required 8-carbon sugar) for incorporation into bacterial lipopolysaccharide in Gram-negative bacteria. This is 3-deoxy-manno-octulosonate cytidylyltransferase from Shigella boydii serotype 18 (strain CDC 3083-94 / BS512).